A 113-amino-acid chain; its full sequence is Large ribosomal subunit protein uL22 (113 aa).

The protein belongs to the universal ribosomal protein uL22 family. Part of the 50S ribosomal subunit.

Its function is as follows. This protein binds specifically to 23S rRNA; its binding is stimulated by other ribosomal proteins, e.g. L4, L17, and L20. It is important during the early stages of 50S assembly. It makes multiple contacts with different domains of the 23S rRNA in the assembled 50S subunit and ribosome. The globular domain of the protein is located near the polypeptide exit tunnel on the outside of the subunit, while an extended beta-hairpin is found that lines the wall of the exit tunnel in the center of the 70S ribosome. This is Large ribosomal subunit protein uL22 from Syntrophomonas wolfei subsp. wolfei (strain DSM 2245B / Goettingen).